An 842-amino-acid polypeptide reads, in one-letter code: Probable cleavage and polyadenylation specificity factor subunit 2 (842 aa).

A compositionally biased stretch (basic and acidic residues) spans 414-425; that stretch reads AEETRIRMERAR. 2 disordered regions span residues 414 to 442 and 708 to 747; these read AEET…DDIA and METF…SIPI. A compositionally biased stretch (acidic residues) spans 432–441; the sequence is ESDDSDDDDI. The segment covering 731–747 has biased composition (polar residues); the sequence is SNGQSKENDENASSIPI.

It belongs to the metallo-beta-lactamase superfamily. RNA-metabolizing metallo-beta-lactamase-like family. CPSF2/YSH1 subfamily. As to quaternary structure, CPSF is a heterotetramer composed of four distinct subunits 160, 100, 70 and 30 kDa.

The protein resides in the nucleus. Its function is as follows. CPSF plays a key role in pre-mRNA 3'-end formation, recognizing the AAUAAA signal sequence and interacting with poly(A)polymerase and other factors to bring about cleavage and poly(A) addition. The chain is Probable cleavage and polyadenylation specificity factor subunit 2 from Caenorhabditis briggsae.